Consider the following 81-residue polypeptide: Small ribosomal subunit protein bS18A (81 aa).

The protein belongs to the bacterial ribosomal protein bS18 family. Part of the 30S ribosomal subunit. Forms a tight heterodimer with protein bS6.

Its function is as follows. Binds as a heterodimer with protein bS6 to the central domain of the 16S rRNA, where it helps stabilize the platform of the 30S subunit. This is Small ribosomal subunit protein bS18A from Saccharopolyspora erythraea (strain ATCC 11635 / DSM 40517 / JCM 4748 / NBRC 13426 / NCIMB 8594 / NRRL 2338).